Consider the following 184-residue polypeptide: Protein N-terminal glutamine amidohydrolase (184 aa).

Residues cysteine 14, histidine 63, and aspartate 78 contribute to the active site.

Belongs to the NTAQ1 family. As to quaternary structure, monomer.

The enzyme catalyses N-terminal L-glutaminyl-[protein] + H2O = N-terminal L-glutamyl-[protein] + NH4(+). Functionally, mediates the side-chain deamidation of N-terminal glutamine residues to glutamate, an important step in N-end rule pathway of protein degradation. Conversion of the resulting N-terminal glutamine to glutamate renders the protein susceptible to arginylation, polyubiquitination and degradation as specified by the N-end rule. Does not act on substrates with internal or C-terminal glutamine and does not act on non-glutamine residues in any position. The polypeptide is Protein N-terminal glutamine amidohydrolase (Caenorhabditis elegans).